A 109-amino-acid polypeptide reads, in one-letter code: MQHPPCEPGNCLSLKEKKITEGSGGVCWGGETDASNPAPALTACCAAEREANVEQGLAGRLLLCNYERRVVRRCKIAGRGRAPLGTRPLDVSSFKLKEEGRPPCLKINK.

Interacts with MYCN and GSK3B. In terms of tissue distribution, expressed in the neuronal cells of the cerebrum and cerebellum, spermatocytes of the testis, pancreatic cells and also the heart. Expressed in both primary and metastatic neuroblastomas and in thyroid tumors (at protein level). Expression is associated with poor prognosis in neuroblastoma. Expressed in the fetal brain, lung, liver and kidney at varying low levels.

The protein resides in the cytoplasm. It is found in the nucleus. Regulates stability of MYCN in neuroblastoma cells by inhibiting GSK3B-mediated MYCN phosphorylation. Inhibits GSK3B activity by promoting its phosphorylation at 'Ser-9'. The polypeptide is N-cym protein (MYCNOS) (Homo sapiens (Human)).